Here is a 199-residue protein sequence, read N- to C-terminus: ATP-dependent Clp protease proteolytic subunit 2 (199 aa).

The active-site Nucleophile is Ser-95. Residue His-120 is part of the active site.

Belongs to the peptidase S14 family. As to quaternary structure, fourteen ClpP subunits assemble into 2 heptameric rings which stack back to back to give a disk-like structure with a central cavity, resembling the structure of eukaryotic proteasomes.

It is found in the cytoplasm. It carries out the reaction Hydrolysis of proteins to small peptides in the presence of ATP and magnesium. alpha-casein is the usual test substrate. In the absence of ATP, only oligopeptides shorter than five residues are hydrolyzed (such as succinyl-Leu-Tyr-|-NHMec, and Leu-Tyr-Leu-|-Tyr-Trp, in which cleavage of the -Tyr-|-Leu- and -Tyr-|-Trp bonds also occurs).. Cleaves peptides in various proteins in a process that requires ATP hydrolysis. Has a chymotrypsin-like activity. Plays a major role in the degradation of misfolded proteins. The sequence is that of ATP-dependent Clp protease proteolytic subunit 2 from Mycolicibacterium paratuberculosis (strain ATCC BAA-968 / K-10) (Mycobacterium paratuberculosis).